Consider the following 122-residue polypeptide: Large ribosomal subunit protein uL14 (122 aa).

Belongs to the universal ribosomal protein uL14 family. As to quaternary structure, part of the 50S ribosomal subunit. Forms a cluster with proteins L3 and L19. In the 70S ribosome, L14 and L19 interact and together make contacts with the 16S rRNA in bridges B5 and B8. Can interact with ribosomal silencing factor RsfS, which may inhibit ribosomal subunit association.

Functionally, binds to 23S rRNA. Forms part of two intersubunit bridges in the 70S ribosome. In Synechocystis sp. (strain ATCC 27184 / PCC 6803 / Kazusa), this protein is Large ribosomal subunit protein uL14.